The sequence spans 122 residues: ATP synthase epsilon chain (122 aa).

The span at 97-112 (EDLKSERELTRSRGDA) shows a compositional bias: basic and acidic residues. Residues 97-122 (EDLKSERELTRSRGDAALRATRRLNS) form a disordered region.

Belongs to the ATPase epsilon chain family. In terms of assembly, F-type ATPases have 2 components, CF(1) - the catalytic core - and CF(0) - the membrane proton channel. CF(1) has five subunits: alpha(3), beta(3), gamma(1), delta(1), epsilon(1). CF(0) has three main subunits: a, b and c.

Its subcellular location is the cell membrane. Functionally, produces ATP from ADP in the presence of a proton gradient across the membrane. The polypeptide is ATP synthase epsilon chain (Corynebacterium aurimucosum (strain ATCC 700975 / DSM 44827 / CIP 107346 / CN-1) (Corynebacterium nigricans)).